Consider the following 199-residue polypeptide: Adenine phosphoribosyltransferase (199 aa).

This sequence belongs to the purine/pyrimidine phosphoribosyltransferase family. In terms of assembly, homodimer.

Its subcellular location is the cytoplasm. It catalyses the reaction AMP + diphosphate = 5-phospho-alpha-D-ribose 1-diphosphate + adenine. Its pathway is purine metabolism; AMP biosynthesis via salvage pathway; AMP from adenine: step 1/1. Its function is as follows. Catalyzes a salvage reaction resulting in the formation of AMP, that is energically less costly than de novo synthesis. The protein is Adenine phosphoribosyltransferase of Rhodopseudomonas palustris (strain BisB18).